Here is a 51-residue protein sequence, read N- to C-terminus: MEIDGRRFAHLDEGRKTGHNVKGGGKFRLLPMAQHQRELVVSGGHEKTNIN.

The chain is Protein alpha-3 (alpha) from Bos taurus (Bovine).